A 92-amino-acid chain; its full sequence is Non-specific lipid-transfer protein B (92 aa).

Disulfide bonds link C3–C51, C13–C28, C29–C74, and C49–C88.

This sequence belongs to the plant LTP family.

Its function is as follows. Plant non-specific lipid-transfer proteins transfer phospholipids as well as galactolipids across membranes. May play a role in wax or cutin deposition in the cell walls of expanding epidermal cells and certain secretory tissues. This chain is Non-specific lipid-transfer protein B, found in Ricinus communis (Castor bean).